The primary structure comprises 981 residues: Rab3 GTPase-activating protein catalytic subunit (981 aa).

A phosphoserine mark is found at S83, S379, S536, S579, S581, and S590. The segment at 532–558 (GKKTSLSDSTTSAYPGDAGKTGGQLGL) is disordered. The interval 591 to 614 (DTEDLKGNGQESGKKGGPKEMANL) is disordered. S664 carries the post-translational modification Phosphoserine.

The protein belongs to the Rab3-GAP catalytic subunit family. As to quaternary structure, the Rab3 GTPase-activating complex is a heterodimer composed of Rab3gap1 and Rab3gap2. The Rab3 GTPase-activating complex interacts with DMXL2. Interacts with LMAN1. As to expression, in the eye, it is highly expressed within the lens, particularly in the anterior lens epithelium and in a ring corresponding to the equatorial region where anterior cells are differentiating into lens fibers. Also highly expressed in the retina.

It is found in the cytoplasm. Its subcellular location is the endoplasmic reticulum. It localises to the golgi apparatus. The protein resides in the cis-Golgi network. In terms of biological role, catalytic subunit of the Rab3 GTPase-activating (Rab3GAP) complex composed of RAB3GAP1 and RAB3GAP2, which has GTPase-activating protein (GAP) activity towards various Rab3 subfamily members (RAB3A, RAB3B, RAB3C and RAB3D), RAB5A and RAB43, and guanine nucleotide exchange factor (GEF) activity towards RAB18. As part of the Rab3GAP complex, acts as a GAP for Rab3 proteins by converting active RAB3-GTP to the inactive form RAB3-GDP. Rab3 proteins are involved in regulated exocytosis of neurotransmitters and hormones. The Rab3GAP complex, acts as a GEF for RAB18 by promoting the conversion of inactive RAB18-GDP to the active form RAB18-GTP. Recruits and stabilizes RAB18 at the cis-Golgi membrane where RAB18 is most likely activated. Also involved in RAB18 recruitment at the endoplasmic reticulum (ER) membrane where it maintains proper ER structure. Required for normal eye and brain development. May participate in neurodevelopmental processes such as proliferation, migration and differentiation before synapse formation, and non-synaptic vesicular release of neurotransmitters. This chain is Rab3 GTPase-activating protein catalytic subunit, found in Mus musculus (Mouse).